Here is a 476-residue protein sequence, read N- to C-terminus: Splicing factor ESS-2 homolog (476 aa).

An N-acetylmethionine modification is found at methionine 1. Low complexity predominate over residues 1 to 18 (METPGASASSLLLPAASR). Disordered stretches follow at residues 1–36 (METP…SKQR) and 91–148 (LGKM…LPSL). A Phosphothreonine modification is found at threonine 3. Over residues 133–142 (DGEAGEEEEK) the composition is skewed to acidic residues. Residue lysine 142 forms a Glycyl lysine isopeptide (Lys-Gly) (interchain with G-Cter in SUMO2) linkage. Serine 292 carries the phosphoserine modification. Residue threonine 386 is modified to Phosphothreonine. Serine 391 and serine 395 each carry phosphoserine. Positions 413–465 (ALRASYTPSPARSTHLKTPASGLQTPTSTPAPGSATRTPLTQDPASITDNLLQ) are disordered. The span at 437–451 (TPTSTPAPGSATRTP) shows a compositional bias: low complexity. A compositionally biased stretch (polar residues) spans 452–463 (LTQDPASITDNL).

Belongs to the ESS2 family. Identified in the spliceosome C complex. Interacts with FRA10AC1. Highly expressed in heart, brain and skeletal muscle. Detected at low levels in placenta.

It is found in the nucleus. In terms of biological role, may be involved in pre-mRNA splicing. The chain is Splicing factor ESS-2 homolog from Homo sapiens (Human).